Here is a 446-residue protein sequence, read N- to C-terminus: Exodeoxyribonuclease 7 large subunit (446 aa).

It belongs to the XseA family. In terms of assembly, heterooligomer composed of large and small subunits.

The protein localises to the cytoplasm. It catalyses the reaction Exonucleolytic cleavage in either 5'- to 3'- or 3'- to 5'-direction to yield nucleoside 5'-phosphates.. Bidirectionally degrades single-stranded DNA into large acid-insoluble oligonucleotides, which are then degraded further into small acid-soluble oligonucleotides. The protein is Exodeoxyribonuclease 7 large subunit of Streptococcus pneumoniae (strain ATCC BAA-255 / R6).